Here is a 480-residue protein sequence, read N- to C-terminus: Serine/threonine-protein kinase WAG2 (480 aa).

The 309-residue stretch at 88 to 396 (LKLIRHLGTG…AQDIKRHPFF (309 aa)) folds into the Protein kinase domain. ATP is bound by residues 94-102 (LGTGNLGRV) and K117. The active-site Proton acceptor is the D213.

This sequence belongs to the protein kinase superfamily. Ser/Thr protein kinase family. Expressed in root tips, lateral root primordia and emerging true leaf primordia.

It localises to the cytoplasm. It is found in the cytosol. It carries out the reaction L-seryl-[protein] + ATP = O-phospho-L-seryl-[protein] + ADP + H(+). It catalyses the reaction L-threonyl-[protein] + ATP = O-phospho-L-threonyl-[protein] + ADP + H(+). Serine/threonine-protein kinase involved in the regulation of auxin signaling. Acts as a positive regulator of cellular auxin efflux and regulates organ development by enhancing PIN-mediated polar auxin transport. Phosphorylates conserved serine residues in the PIN auxin efflux carriers. Phosphorylation of PIN proteins is required and sufficient for apical-basal PIN polarity that enables directional intercellular auxin fluxes, which mediate differential growth, tissue patterning and organogenesis. Acts as a suppressor of root waving. The chain is Serine/threonine-protein kinase WAG2 (WAG2) from Arabidopsis thaliana (Mouse-ear cress).